The primary structure comprises 37 residues: Large ribosomal subunit protein bL36 (37 aa).

The protein belongs to the bacterial ribosomal protein bL36 family.

In Leptospira biflexa serovar Patoc (strain Patoc 1 / Ames), this protein is Large ribosomal subunit protein bL36.